A 42-amino-acid polypeptide reads, in one-letter code: Hemoglobin subunit beta-A (42 aa).

Residues 2 to 42 (EWTDAERSAILSLWGKIDTDELGPALLARLXLVXXXTQRYF) form the Globin domain.

It belongs to the globin family. As to quaternary structure, heterotetramer of two alpha chains and two beta chains. Red blood cells.

In terms of biological role, involved in oxygen transport from gills to the various peripheral tissues. The chain is Hemoglobin subunit beta-A from Catostomus clarkii (Desert sucker).